The primary structure comprises 629 residues: tRNA uridine 5-carboxymethylaminomethyl modification enzyme MnmG (629 aa).

13 to 18 (GGGHAG) provides a ligand contact to FAD. Residue 273–287 (GPRYCPSIEDKVNRF) participates in NAD(+) binding.

Belongs to the MnmG family. As to quaternary structure, homodimer. Heterotetramer of two MnmE and two MnmG subunits. FAD serves as cofactor.

Its subcellular location is the cytoplasm. In terms of biological role, NAD-binding protein involved in the addition of a carboxymethylaminomethyl (cmnm) group at the wobble position (U34) of certain tRNAs, forming tRNA-cmnm(5)s(2)U34. In Hahella chejuensis (strain KCTC 2396), this protein is tRNA uridine 5-carboxymethylaminomethyl modification enzyme MnmG.